Reading from the N-terminus, the 204-residue chain is MALSLAINVPPVRDNLLRPQPFQSQFRPNLLKFPIPSSARIRCSSSSSFNDISLKTVTPDNKNSFVCRFNATQLEVQETNQPYAETYAVGRHIRMSADKARRVVDQIRGRPYEASLMVLELMPYRACEAIIKIVFSAGANASHNLGLSKSSLFISKAEVNEGKTLKRVRARAQGRANQILKRTCHITITVRGLPDESDKEENSS.

This sequence belongs to the universal ribosomal protein uL22 family. As to quaternary structure, part of the 50S ribosomal subunit.

It localises to the plastid. The protein localises to the chloroplast. Functionally, this protein binds specifically to 23S rRNA. In terms of biological role, the globular domain of the protein is located near the polypeptide exit tunnel on the outside of the subunit, while an extended beta-hairpin is found that lines the wall of the exit tunnel in the center of the 70S ribosome. The protein is Large ribosomal subunit protein uL22c (rpl22) of Pisum sativum (Garden pea).